The primary structure comprises 150 residues: Anti-sigma F factor (150 aa).

Belongs to the anti-sigma-factor family.

The catalysed reaction is L-seryl-[protein] + ATP = O-phospho-L-seryl-[protein] + ADP + H(+). The enzyme catalyses L-threonyl-[protein] + ATP = O-phospho-L-threonyl-[protein] + ADP + H(+). In terms of biological role, binds to sigma F and blocks its ability to form an RNA polymerase holoenzyme (E-sigma F). Phosphorylates SpoIIAA on a serine residue. This phosphorylation may enable SpoIIAA to act as an anti-anti-sigma factor that counteracts SpoIIAB and thus releases sigma F from inhibition. The chain is Anti-sigma F factor from Pasteuria penetrans.